The following is a 417-amino-acid chain: Senescence-associated protein AAF, chloroplastic (417 aa).

The transit peptide at 1 to 36 (MALNVSKVVPNSPILVKSVNASRSRRVLLAYVHHPL) directs the protein to the chloroplast.

This sequence belongs to the ATA15/OSA15 family. In terms of tissue distribution, expressed in leaves. Expressed in 7-day-old seedlings, roots, rosette leaves, cauline leaves and flower buds.

Its subcellular location is the plastid. It localises to the chloroplast. Involved in modulation of redox homeostasis to regulate leaf senescence mediated by age and stress factors during plant development. Its function is dependent of EIN2, a central factor of ethylene signaling. The sequence is that of Senescence-associated protein AAF, chloroplastic from Arabidopsis thaliana (Mouse-ear cress).